The sequence spans 151 residues: Deoxyuridine 5'-triphosphate nucleotidohydrolase (151 aa).

Residues 70 to 72, Asn-83, 87 to 89, and Met-97 each bind substrate; these read RSG and LID.

The protein belongs to the dUTPase family. The cofactor is Mg(2+).

It catalyses the reaction dUTP + H2O = dUMP + diphosphate + H(+). It participates in pyrimidine metabolism; dUMP biosynthesis; dUMP from dCTP (dUTP route): step 2/2. Its function is as follows. This enzyme is involved in nucleotide metabolism: it produces dUMP, the immediate precursor of thymidine nucleotides and it decreases the intracellular concentration of dUTP so that uracil cannot be incorporated into DNA. The polypeptide is Deoxyuridine 5'-triphosphate nucleotidohydrolase (Pseudomonas aeruginosa (strain LESB58)).